The following is a 123-amino-acid chain: uncharacterized protein (123 aa).

A helical membrane pass occupies residues 5-25 (GTLVIIFAIVLILCIMLLFFY). The disordered stretch occupies residues 32–53 (KPSVLPPPIPPPTPPPSKKKYD). Pro residues predominate over residues 35–47 (VLPPPIPPPTPPP).

It belongs to the asfivirus CP123L family.

It localises to the host membrane. It is found in the virion. This is an uncharacterized protein from Ornithodoros (relapsing fever ticks).